Reading from the N-terminus, the 682-residue chain is Pesticidal crystal protein Cry19Ba (682 aa).

This sequence belongs to the delta endotoxin family.

Its function is as follows. Promotes colloidosmotic lysis by binding to the midgut epithelial cells of mosquitos. Has larvicidal activity against Culex pipiens molestus, but not to Anopheles stephensi. The sequence is that of Pesticidal crystal protein Cry19Ba from Bacillus thuringiensis subsp. higo.